The primary structure comprises 199 residues: Prefoldin subunit 3 (199 aa).

At methionine 1 the chain carries N-acetylmethionine.

It belongs to the prefoldin subunit alpha family. In terms of assembly, heterohexamer of two PFD-alpha type and four PFD-beta type subunits.

Functionally, binds specifically to cytosolic chaperonin (c-CPN) and transfers target proteins to it. Binds to nascent polypeptide chain and promotes folding in an environment in which there are many competing pathways for nonnative proteins. In Saccharomyces cerevisiae (strain ATCC 204508 / S288c) (Baker's yeast), this protein is Prefoldin subunit 3 (PAC10).